Consider the following 530-residue polypeptide: MEQLLAQLHTCSELIAEGYSSTGNIGWLNEFCATFLDFASDLKARLPEVAPSGANLDVETIFLCLTQVVTCITHLERTISMEAPHMTRQHFLDRLDWCLRRLLVSLTQLEGNVTPVKNLEDHSFVELMDLALDHLDDYMEKLAQQRNNSLHILEESFTEDTYQLASIVNHIVRHALAFANVAIHSDKKALTALCETLLAECATFHEEAGEPNSGHRKLEALSLERALYALESFLNEALLHLLFVSLIDLENASVEKLKDALQRDPAGAQELISAFDTNMDRIQQIGVLAIAFSQDIKTKTIVRSCLASLESLDACIVPALQLPESTSSAHHAEVLQEHFNQELLIFRNVIHEIIDSCSLINNYLDMLGERIHVQDKSHLKLIVQRGGVVVDHFRLPVNYSGLSEDGKRVHKDLILILRECQAVVNLDVPVDPKRIVKRLKILYSVLAKLRDLICRDNLEPDSSVASEAQVPSSATRTFVRSSRSFGKRHRSFVKQTGNCSVFGPQDSLAESGHSESDLISFQITEILRLD.

As to expression, transient expression in blastoderm from nuclear cycle 11 to the onset of gastrulation.

The protein localises to the cytoplasm. Its subcellular location is the cell membrane. Its function is as follows. Required for the cellularization of the syncytial blastoderm embryo. Involved in the localization of the actin filaments just prior to and during plasma membrane invagination. Sry-alpha together with nullo and bnk may provide auxiliary functions, by acting both to stabilize a large and dynamic microfilament structure and regulate its functions. The protein is Serendipity locus protein alpha (Sry-alpha) of Drosophila melanogaster (Fruit fly).